Here is a 198-residue protein sequence, read N- to C-terminus: Adenylyl-sulfate kinase (198 aa).

ATP is bound at residue 31-38 (GLSGAGKS). The Phosphoserine intermediate role is filled by serine 105.

It belongs to the APS kinase family.

The enzyme catalyses adenosine 5'-phosphosulfate + ATP = 3'-phosphoadenylyl sulfate + ADP + H(+). It functions in the pathway sulfur metabolism; hydrogen sulfide biosynthesis; sulfite from sulfate: step 2/3. Its function is as follows. Catalyzes the synthesis of activated sulfate. The sequence is that of Adenylyl-sulfate kinase from Shewanella amazonensis (strain ATCC BAA-1098 / SB2B).